Consider the following 304-residue polypeptide: Polyisoprenyl-teichoic acid--peptidoglycan teichoic acid transferase TagU (304 aa).

The Cytoplasmic segment spans residues 1 to 4; it reads MKKK. A helical; Signal-anchor for type II membrane protein transmembrane segment spans residues 5–25; that stretch reads ILFWILGIIGILIIGGGAYAY. Residues 26–304 lie on the Extracellular side of the membrane; the sequence is SIYSSVSKTL…KLRAHLEVTK (279 aa).

It belongs to the LytR/CpsA/Psr (LCP) family.

The protein resides in the cell membrane. The protein operates within cell wall biogenesis. May catalyze the final step in cell wall teichoic acid biosynthesis, the transfer of the anionic cell wall polymers (APs) from their lipid-linked precursor to the cell wall peptidoglycan (PG). The polypeptide is Polyisoprenyl-teichoic acid--peptidoglycan teichoic acid transferase TagU (Bacillus cereus (strain ATCC 14579 / DSM 31 / CCUG 7414 / JCM 2152 / NBRC 15305 / NCIMB 9373 / NCTC 2599 / NRRL B-3711)).